The chain runs to 287 residues: 2-dehydro-3-deoxyphosphooctonate aldolase (287 aa).

This sequence belongs to the KdsA family.

It localises to the cytoplasm. The enzyme catalyses D-arabinose 5-phosphate + phosphoenolpyruvate + H2O = 3-deoxy-alpha-D-manno-2-octulosonate-8-phosphate + phosphate. The protein operates within carbohydrate biosynthesis; 3-deoxy-D-manno-octulosonate biosynthesis; 3-deoxy-D-manno-octulosonate from D-ribulose 5-phosphate: step 2/3. Its pathway is bacterial outer membrane biogenesis; lipopolysaccharide biosynthesis. The sequence is that of 2-dehydro-3-deoxyphosphooctonate aldolase from Rhodopseudomonas palustris (strain BisB5).